The following is a 435-amino-acid chain: Adenylosuccinate synthetase (435 aa).

Residues 22-28 (GDEGKGK) and 50-52 (GHT) contribute to the GTP site. Asp23 acts as the Proton acceptor in catalysis. Mg(2+)-binding residues include Asp23 and Gly50. IMP is bound by residues 23-26 (DEGK), 48-51 (NAGH), Thr140, Arg154, Gln235, Thr250, and Arg314. The Proton donor role is filled by His51. A substrate-binding site is contributed by 310 to 316 (ATTGRKR). Residues Arg316, 342 to 344 (KLD), and 424 to 426 (SVG) contribute to the GTP site.

The protein belongs to the adenylosuccinate synthetase family. In terms of assembly, homodimer. The cofactor is Mg(2+).

The protein localises to the cytoplasm. The catalysed reaction is IMP + L-aspartate + GTP = N(6)-(1,2-dicarboxyethyl)-AMP + GDP + phosphate + 2 H(+). It functions in the pathway purine metabolism; AMP biosynthesis via de novo pathway; AMP from IMP: step 1/2. Functionally, plays an important role in the de novo pathway of purine nucleotide biosynthesis. Catalyzes the first committed step in the biosynthesis of AMP from IMP. This is Adenylosuccinate synthetase from Chlorobaculum tepidum (strain ATCC 49652 / DSM 12025 / NBRC 103806 / TLS) (Chlorobium tepidum).